A 584-amino-acid polypeptide reads, in one-letter code: MSRGDKMLKFEVKARDGAGRIGKLEVNGKKIETPAIMPVVNPKQLIVEPKELEKMGFDIIITNSYIIYKDRELREKALEVGIHKLLGYDGIIEVDSGSFQLMRYGNVDVSNREIVEFQHRIGVDIGTFLDIPTPPDAPKEKAMEDLKITLERAREAEEIKEIAMNAAIQGSTYTDLRRYAARRLSSMNFEIHPIGGVVPLLEAYRFREVVDIVISSKMALRPDRPVHLFGAGHPMVFALAVAMGVDLFDSASYALYAKDDRYLTPEGTKRLDELEYFPCSCPVCSRYTPQELREMPKEERARLLAIHNLWVIKEEIERIKQAIREGELWRLVDERARSHPKLYSAYKRLLDHYTFLEEFEPVTKKSAVFKISHESLRWPLVRRARERAERVNSKFGDLVEHPIFGKVTKYLTLTYPFAQSEAEDEFSIEKPTRENAIRYVMAIAEYQFGENASKAFEGAEVELARTGMPRQVKLNGKRLATVRAEDGFLTLGIEGAKRLHKVLEYPRMRVVVSEEAEPFARKGKDVFAKFVLFADPGIRPYDEVLVVNEKDELLATGQALMSGREMIVFQYGRAVKVRRGISGG.

Catalysis depends on D95, which acts as the Nucleophile. The substrate site is built by D130 and G196. Residues C279, C281, and C284 each contribute to the Zn(2+) site. The PUA domain occupies R507–S582.

It belongs to the archaeosine tRNA-ribosyltransferase family. The cofactor is Zn(2+).

It catalyses the reaction guanosine(15) in tRNA + 7-cyano-7-deazaguanine = 7-cyano-7-carbaguanosine(15) in tRNA + guanine. The protein operates within tRNA modification; archaeosine-tRNA biosynthesis. Its function is as follows. Exchanges the guanine residue with 7-cyano-7-deazaguanine (preQ0) at position 15 in the dihydrouridine loop (D-loop) of archaeal tRNAs. The protein is tRNA-guanine(15) transglycosylase of Pyrococcus abyssi (strain GE5 / Orsay).